The following is a 96-amino-acid chain: C-C motif chemokine 20 (96 aa).

Residues 1–26 (MMCSSKNLLLAALMSVLLLHFCSKSE) form the signal peptide. Disulfide bonds link Cys-32–Cys-58 and Cys-33–Cys-74.

It belongs to the intercrine beta (chemokine CC) family.

It localises to the secreted. In terms of biological role, acts as a ligand for C-C chemokine receptor CCR6. Signals through binding and activation of CCR6 and induces a strong chemotactic response and mobilization of intracellular calcium ions. The ligand-receptor pair CCL20-CCR6 is responsible for the chemotaxis of dendritic cells (DC), effector/memory T-cells and B-cells and plays an important role at skin and mucosal surfaces under homeostatic and inflammatory conditions, as well as in pathology, including cancer and autoimmune diseases. CCL20 acts as a chemotactic factor that attracts lymphocytes and, slightly, neutrophils, but not monocytes. Involved in the recruitment of both the pro-inflammatory IL17 producing helper T-cells (Th17) and the regulatory T-cells (Treg) to sites of inflammation. Required for optimal migration of thymic natural regulatory T cells (nTregs) and DN1 early thymocyte progenitor cells. Positively regulates sperm motility and chemotaxis via its binding to CCR6 which triggers Ca2+ mobilization in the sperm which is important for its motility. May be involved in formation and function of the mucosal lymphoid tissues by attracting lymphocytes and dendritic cells towards epithelial cells. This is C-C motif chemokine 20 (CCL20) from Bos taurus (Bovine).